Reading from the N-terminus, the 325-residue chain is Biotin synthase (325 aa).

Positions 49-279 (VGDKVELCSI…DKNIRYAGGR (231 aa)) constitute a Radical SAM core domain. The [4Fe-4S] cluster site is built by Cys66, Cys70, and Cys73. [2Fe-2S] cluster contacts are provided by Cys144, Cys204, and Arg274.

Belongs to the radical SAM superfamily. Biotin synthase family. In terms of assembly, homodimer. [4Fe-4S] cluster is required as a cofactor. It depends on [2Fe-2S] cluster as a cofactor.

The enzyme catalyses (4R,5S)-dethiobiotin + (sulfur carrier)-SH + 2 reduced [2Fe-2S]-[ferredoxin] + 2 S-adenosyl-L-methionine = (sulfur carrier)-H + biotin + 2 5'-deoxyadenosine + 2 L-methionine + 2 oxidized [2Fe-2S]-[ferredoxin]. Its pathway is cofactor biosynthesis; biotin biosynthesis; biotin from 7,8-diaminononanoate: step 2/2. Functionally, catalyzes the conversion of dethiobiotin (DTB) to biotin by the insertion of a sulfur atom into dethiobiotin via a radical-based mechanism. The protein is Biotin synthase of Carboxydothermus hydrogenoformans (strain ATCC BAA-161 / DSM 6008 / Z-2901).